The following is a 123-amino-acid chain: Protein Wnt-3b (123 aa).

S1 is lipidated: O-palmitoleoyl serine; by PORCN. C89 and C104 are disulfide-bonded. The N-linked (GlcNAc...) asparagine glycan is linked to N90.

It belongs to the Wnt family. Palmitoleoylation is required for efficient binding to frizzled receptors. Depalmitoleoylation leads to Wnt signaling pathway inhibition.

Its subcellular location is the secreted. The protein resides in the extracellular space. The protein localises to the extracellular matrix. Its function is as follows. Ligand for members of the frizzled family of seven transmembrane receptors. Probable developmental protein. May be a signaling molecule which affects the development of discrete regions of tissues. Is likely to signal over only few cell diameters. This is Protein Wnt-3b (WNT-3B) from Alopias vulpinus (Common thresher shark).